The following is a 146-amino-acid chain: Large ribosomal subunit protein uL15 (146 aa).

The span at 1-13 (MKLHELKPAEGSR) shows a compositional bias: basic and acidic residues. The tract at residues 1–65 (MKLHELKPAE…PLYRRLPKRG (65 aa)) is disordered. 2 stretches are compositionally biased toward gly residues: residues 21–31 (RGIGSGNGKTA) and 42–52 (SGGGVRPGFEG).

It belongs to the universal ribosomal protein uL15 family. Part of the 50S ribosomal subunit.

Binds to the 23S rRNA. The sequence is that of Large ribosomal subunit protein uL15 from Halalkalibacterium halodurans (strain ATCC BAA-125 / DSM 18197 / FERM 7344 / JCM 9153 / C-125) (Bacillus halodurans).